A 466-amino-acid polypeptide reads, in one-letter code: Cysteine--tRNA ligase (466 aa).

Cys-29 contributes to the Zn(2+) binding site. The 'HIGH' region signature appears at 31–41 (PTVYNYIHIGN). Residues Cys-209, His-234, and Glu-238 each contribute to the Zn(2+) site. The 'KMSKS' region motif lies at 266–270 (KMSKS). Lys-269 contributes to the ATP binding site. At Ser-270 the chain carries Phosphoserine.

Belongs to the class-I aminoacyl-tRNA synthetase family. In terms of assembly, monomer. Requires Zn(2+) as cofactor.

It localises to the cytoplasm. It catalyses the reaction tRNA(Cys) + L-cysteine + ATP = L-cysteinyl-tRNA(Cys) + AMP + diphosphate. This is Cysteine--tRNA ligase from Bacillus velezensis (strain DSM 23117 / BGSC 10A6 / LMG 26770 / FZB42) (Bacillus amyloliquefaciens subsp. plantarum).